Consider the following 355-residue polypeptide: 3-dehydroquinate synthase (355 aa).

Residues 66–71 (SGETTK), 100–104 (GATGD), 124–125 (TT), Lys-136, Lys-145, and 163–166 (FLET) each bind NAD(+). Glu-178, His-242, and His-256 together coordinate Zn(2+).

It belongs to the sugar phosphate cyclases superfamily. Dehydroquinate synthase family. Requires Co(2+) as cofactor. Zn(2+) is required as a cofactor. The cofactor is NAD(+).

The protein localises to the cytoplasm. It carries out the reaction 7-phospho-2-dehydro-3-deoxy-D-arabino-heptonate = 3-dehydroquinate + phosphate. It participates in metabolic intermediate biosynthesis; chorismate biosynthesis; chorismate from D-erythrose 4-phosphate and phosphoenolpyruvate: step 2/7. Catalyzes the conversion of 3-deoxy-D-arabino-heptulosonate 7-phosphate (DAHP) to dehydroquinate (DHQ). The polypeptide is 3-dehydroquinate synthase (Staphylococcus saprophyticus subsp. saprophyticus (strain ATCC 15305 / DSM 20229 / NCIMB 8711 / NCTC 7292 / S-41)).